We begin with the raw amino-acid sequence, 300 residues long: Inosose dehydratase (300 aa).

This sequence belongs to the IolE/MocC family. The cofactor is glutathione. Co(2+) is required as a cofactor. Requires Mn(2+) as cofactor.

The enzyme catalyses scyllo-inosose = 3D-3,5/4-trihydroxycyclohexane-1,2-dione + H2O. The protein operates within polyol metabolism; myo-inositol degradation into acetyl-CoA; acetyl-CoA from myo-inositol: step 2/7. Catalyzes the dehydration of inosose (2-keto-myo-inositol, 2KMI or 2,4,6/3,5-pentahydroxycyclohexanone) to 3D-(3,5/4)-trihydroxycyclohexane-1,2-dione (D-2,3-diketo-4-deoxy-epi-inositol). This chain is Inosose dehydratase, found in Lactiplantibacillus plantarum (strain ATCC BAA-793 / NCIMB 8826 / WCFS1) (Lactobacillus plantarum).